Reading from the N-terminus, the 1288-residue chain is Contactin-associated protein-like 3B (1288 aa).

A signal peptide spans 1-25 (MASVAWAVLKVLLLLPTQTWSPVGA). The segment at 23–61 (VGAGNPPDCDSPLASALPRSSFSSSSELSSSHGPGFSRL) is disordered. At 26 to 1245 (GNPPDCDSPL…LVNADRRDSA (1220 aa)) the chain is on the extracellular side. An F5/8 type C domain is found at 31–177 (CDSPLASALP…IGMRIEVYGC (147 aa)). Cystine bridges form between C31–C177, C332–C364, C513–C545, C551–C562, C556–C571, and C573–C583. Residues 33–59 (SPLASALPRSSFSSSSELSSSHGPGFS) show a composition bias toward low complexity. 2 consecutive Laminin G-like domains span residues 183–364 (VVYF…SFSC) and 370–545 (VPVT…IDSC). N359 carries an N-linked (GlcNAc...) asparagine glycan. One can recognise an EGF-like 1 domain in the interval 547–584 (ITDRCLPSYCEHGGECSQSWDTFSCDCLGTGYTGETCH). One can recognise a Fibrinogen C-terminal domain in the interval 585–792 (SSLYEQSCEA…LLCRGDKSFW (208 aa)). N-linked (GlcNAc...) asparagine glycosylation occurs at N706. The Laminin G-like 3 domain occupies 793–958 (NSASFNTETS…TVTPGVEPGC (166 aa)). 5 disulfides stabilise this stretch: C931-C958, C962-C975, C969-C984, C986-C996, and C1167-C1203. An EGF-like 2 domain is found at 959-997 (AGHCSTYGHLCRNGGRCREKRRGVTCDCAFSAYDGPFCS). The 188-residue stretch at 1016 to 1203 (EHYTLSENSS…RGHVAPMARC (188 aa)) folds into the Laminin G-like 4 domain. The segment at 1215 to 1236 (ELAPRLAGGAGRSGPVDEGEPL) is disordered. Residues 1246-1266 (VIGGVIAVEIFILLCITAIAI) form a helical membrane-spanning segment. Over 1267 to 1288 (RIYQQRKLRKENESKVSKKEEC) the chain is Cytoplasmic.

The protein belongs to the neurexin family.

Its subcellular location is the membrane. The chain is Contactin-associated protein-like 3B (CNTNAP3B) from Homo sapiens (Human).